Reading from the N-terminus, the 129-residue chain is DNA-directed RNA polymerase II subunit RPB9 (129 aa).

Cys-21, Cys-24, Cys-43, Cys-46, Cys-90, Cys-93, Cys-118, and Cys-123 together coordinate Zn(2+). The C4-type zinc finger occupies 21–46 (CQECNNMLYPKEDKENKILLYACRNC). Residues 86 to 128 (EDHACPKCSHREAVFFQAQTRRAEEEMRLYYVCTNQNCTHRWT) form a TFIIS-type zinc finger.

It belongs to the archaeal RpoM/eukaryotic RPA12/RPB9/RPC11 RNA polymerase family. As to quaternary structure, component of the RNA polymerase II (Pol II) complex consisting of 12 subunits.

Its subcellular location is the nucleus. It is found in the nucleolus. DNA-dependent RNA polymerase catalyzes the transcription of DNA into RNA using the four ribonucleoside triphosphates as substrates. Component of RNA polymerase II which synthesizes mRNA precursors and many functional non-coding RNAs. Pol II is the central component of the basal RNA polymerase II transcription machinery. It is composed of mobile elements that move relative to each other. RPB9 is part of the upper jaw surrounding the central large cleft and thought to grab the incoming DNA template. This chain is DNA-directed RNA polymerase II subunit RPB9, found in Drosophila melanogaster (Fruit fly).